A 509-amino-acid chain; its full sequence is Subtelomeric hrmA-associated cluster protein AFUB_078990 (509 aa).

Its function is as follows. Part of the subtelomeric hrmA-associated cluster (HAC) containing genes that alter the hyphal surface (such as reduced total chitin or increased beta-glucan exposure) and perturb inter-hyphal interactions within the developing biofilms, resulting in a loss of vertically aligned polarized growing filaments. Consequently, this hypoxia-typic morphotype (called H-MORPH) with altered biofilm architecture leads to increased hypoxia fitness, increased host inflammation, rapid disease progression, and mortality in a murine model of invasive aspergillosis. This is Subtelomeric hrmA-associated cluster protein AFUB_078990 from Aspergillus fumigatus (strain CBS 144.89 / FGSC A1163 / CEA10) (Neosartorya fumigata).